Consider the following 951-residue polypeptide: Valine--tRNA ligase (951 aa).

The 'HIGH' region motif lies at 42–52 (PNVTGSLHMGH). Positions 554–558 (KMSKS) match the 'KMSKS' region motif. Lys557 provides a ligand contact to ATP. Positions 880–944 (AGLINKEDEL…AEAKAKLIEQ (65 aa)) form a coiled coil.

Belongs to the class-I aminoacyl-tRNA synthetase family. ValS type 1 subfamily. As to quaternary structure, monomer.

Its subcellular location is the cytoplasm. The catalysed reaction is tRNA(Val) + L-valine + ATP = L-valyl-tRNA(Val) + AMP + diphosphate. Catalyzes the attachment of valine to tRNA(Val). As ValRS can inadvertently accommodate and process structurally similar amino acids such as threonine, to avoid such errors, it has a 'posttransfer' editing activity that hydrolyzes mischarged Thr-tRNA(Val) in a tRNA-dependent manner. This Shigella dysenteriae serotype 1 (strain Sd197) protein is Valine--tRNA ligase.